Consider the following 460-residue polypeptide: Bifunctional protein GlmU (460 aa).

The segment at 1–235 (MALSAAIVLA…PLTVEGVNDR (235 aa)) is pyrophosphorylase. UDP-N-acetyl-alpha-D-glucosamine contacts are provided by residues 9-12 (LAAG), Lys-23, Gln-76, and 81-82 (GT). Asp-109 provides a ligand contact to Mg(2+). UDP-N-acetyl-alpha-D-glucosamine contacts are provided by Gly-146, Glu-161, Asn-176, and Asn-233. Asn-233 contacts Mg(2+). The tract at residues 236 to 256 (VQLAALSKTYNRRVCERWMRN) is linker. Residues 257-460 (GVTILDPETT…VEGWKPAWER (204 aa)) are N-acetyltransferase. Positions 338 and 356 each coordinate UDP-N-acetyl-alpha-D-glucosamine. Residue His-368 is the Proton acceptor of the active site. Residues Tyr-371 and Asn-382 each contribute to the UDP-N-acetyl-alpha-D-glucosamine site. Acetyl-CoA is bound by residues 391–392 (NY) and Ala-428.

In the N-terminal section; belongs to the N-acetylglucosamine-1-phosphate uridyltransferase family. It in the C-terminal section; belongs to the transferase hexapeptide repeat family. In terms of assembly, homotrimer. Mg(2+) serves as cofactor.

Its subcellular location is the cytoplasm. It catalyses the reaction alpha-D-glucosamine 1-phosphate + acetyl-CoA = N-acetyl-alpha-D-glucosamine 1-phosphate + CoA + H(+). It carries out the reaction N-acetyl-alpha-D-glucosamine 1-phosphate + UTP + H(+) = UDP-N-acetyl-alpha-D-glucosamine + diphosphate. It functions in the pathway nucleotide-sugar biosynthesis; UDP-N-acetyl-alpha-D-glucosamine biosynthesis; N-acetyl-alpha-D-glucosamine 1-phosphate from alpha-D-glucosamine 6-phosphate (route II): step 2/2. The protein operates within nucleotide-sugar biosynthesis; UDP-N-acetyl-alpha-D-glucosamine biosynthesis; UDP-N-acetyl-alpha-D-glucosamine from N-acetyl-alpha-D-glucosamine 1-phosphate: step 1/1. Its pathway is bacterial outer membrane biogenesis; LPS lipid A biosynthesis. Catalyzes the last two sequential reactions in the de novo biosynthetic pathway for UDP-N-acetylglucosamine (UDP-GlcNAc). The C-terminal domain catalyzes the transfer of acetyl group from acetyl coenzyme A to glucosamine-1-phosphate (GlcN-1-P) to produce N-acetylglucosamine-1-phosphate (GlcNAc-1-P), which is converted into UDP-GlcNAc by the transfer of uridine 5-monophosphate (from uridine 5-triphosphate), a reaction catalyzed by the N-terminal domain. This Bifidobacterium longum subsp. infantis (strain ATCC 15697 / DSM 20088 / JCM 1222 / NCTC 11817 / S12) protein is Bifunctional protein GlmU.